The following is a 390-amino-acid chain: Scoulerine-9-O-methyltransferase 1 (390 aa).

Substrate is bound at residue Glu-153. Residues Met-207, Ser-211, Gly-235, Asp-258, Asp-278–Met-279, and Lys-292 contribute to the S-adenosyl-L-methionine site. Residue His-296 is the Proton acceptor of the active site. Position 296–297 (His-296–Asp-297) interacts with substrate.

Belongs to the class I-like SAM-binding methyltransferase superfamily. Cation-independent O-methyltransferase family. COMT subfamily. In terms of assembly, homodimer. Highly expressed in capsules. Expressed is stems. Expressed at low levels in roots.

The enzyme catalyses (S)-scoulerine + S-adenosyl-L-methionine = (S)-tetrahydrocolumbamine + S-adenosyl-L-homocysteine + H(+). It catalyses the reaction (S)-tetrahydrocolumbamine + S-adenosyl-L-methionine = (S)-tetrahydropalmatine + S-adenosyl-L-homocysteine + H(+). It carries out the reaction (S)-norreticuline + S-adenosyl-L-methionine = (S)-norcodamine + S-adenosyl-L-homocysteine + H(+). The catalysed reaction is (S)-reticuline + S-adenosyl-L-methionine = (S)-codamine + S-adenosyl-L-homocysteine + H(+). The protein operates within alkaloid biosynthesis. Functionally, methyltransferase involved in the biosynthesis of the benzylisoquinoline alkaloid noscapine. Catalyzes the conversion of (S)-scoulerine to (S)-tetrahydrocolumbamine. Can convert (S)-tetrahydrocolumbamine to tetrahydropalmatine. Can convert (S)-norreticuline to (S)-norcodamine. Can convert (S)-reticuline to (S)-codamine. Substrate preference is (S)-scoulerine &gt; (S)-tetrahydrocolumbamine &gt; (S)-norreticuline &gt; (S)-reticuline. The polypeptide is Scoulerine-9-O-methyltransferase 1 (Papaver somniferum (Opium poppy)).